The following is a 547-amino-acid chain: Glucose-6-phosphate isomerase (547 aa).

The active-site Proton donor is E350. Catalysis depends on residues H381 and K510.

The protein belongs to the GPI family.

The protein resides in the cytoplasm. The catalysed reaction is alpha-D-glucose 6-phosphate = beta-D-fructose 6-phosphate. It functions in the pathway carbohydrate biosynthesis; gluconeogenesis. Its pathway is carbohydrate degradation; glycolysis; D-glyceraldehyde 3-phosphate and glycerone phosphate from D-glucose: step 2/4. Catalyzes the reversible isomerization of glucose-6-phosphate to fructose-6-phosphate. This is Glucose-6-phosphate isomerase from Mesorhizobium japonicum (strain LMG 29417 / CECT 9101 / MAFF 303099) (Mesorhizobium loti (strain MAFF 303099)).